A 307-amino-acid chain; its full sequence is Malate dehydrogenase (307 aa).

Residues 8 to 13 (GAGRVG) and D33 each bind NAD(+). The substrate site is built by R82 and R88. Residues N95 and 118-120 (VSN) contribute to the NAD(+) site. Residues N120 and R151 each contribute to the substrate site. Residue H175 is the Proton acceptor of the active site.

It belongs to the LDH/MDH superfamily. MDH type 3 family.

The enzyme catalyses (S)-malate + NAD(+) = oxaloacetate + NADH + H(+). Functionally, catalyzes the reversible oxidation of malate to oxaloacetate. The polypeptide is Malate dehydrogenase (Thioalkalivibrio sulfidiphilus (strain HL-EbGR7)).